The chain runs to 298 residues: Phosphatidylglycerol--prolipoprotein diacylglyceryl transferase (298 aa).

3 helical membrane-spanning segments follow: residues 17–37 (LAVR…IVVG), 59–79 (MMFY…VLFY), and 97–117 (GGMS…LFAW). Residue Arg142 coordinates a 1,2-diacyl-sn-glycero-3-phospho-(1'-sn-glycerol). A run of 2 helical transmembrane segments spans residues 230–250 (MGAI…TVEF) and 257–277 (FLGL…PMIV).

The protein belongs to the Lgt family.

It is found in the cell inner membrane. The enzyme catalyses L-cysteinyl-[prolipoprotein] + a 1,2-diacyl-sn-glycero-3-phospho-(1'-sn-glycerol) = an S-1,2-diacyl-sn-glyceryl-L-cysteinyl-[prolipoprotein] + sn-glycerol 1-phosphate + H(+). The protein operates within protein modification; lipoprotein biosynthesis (diacylglyceryl transfer). In terms of biological role, catalyzes the transfer of the diacylglyceryl group from phosphatidylglycerol to the sulfhydryl group of the N-terminal cysteine of a prolipoprotein, the first step in the formation of mature lipoproteins. The chain is Phosphatidylglycerol--prolipoprotein diacylglyceryl transferase from Burkholderia cenocepacia (strain ATCC BAA-245 / DSM 16553 / LMG 16656 / NCTC 13227 / J2315 / CF5610) (Burkholderia cepacia (strain J2315)).